We begin with the raw amino-acid sequence, 887 residues long: Alanine--tRNA ligase (887 aa).

Zn(2+)-binding residues include His-564, His-568, Cys-675, and His-679. Residues 851–866 (GQGGGGRPDMAQGGGP) are compositionally biased toward gly residues. The tract at residues 851-871 (GQGGGGRPDMAQGGGPDGDKA) is disordered.

The protein belongs to the class-II aminoacyl-tRNA synthetase family. The cofactor is Zn(2+).

The protein localises to the cytoplasm. It carries out the reaction tRNA(Ala) + L-alanine + ATP = L-alanyl-tRNA(Ala) + AMP + diphosphate. Functionally, catalyzes the attachment of alanine to tRNA(Ala) in a two-step reaction: alanine is first activated by ATP to form Ala-AMP and then transferred to the acceptor end of tRNA(Ala). Also edits incorrectly charged Ser-tRNA(Ala) and Gly-tRNA(Ala) via its editing domain. This is Alanine--tRNA ligase from Rhizorhabdus wittichii (strain DSM 6014 / CCUG 31198 / JCM 15750 / NBRC 105917 / EY 4224 / RW1) (Sphingomonas wittichii).